A 186-amino-acid polypeptide reads, in one-letter code: Elongation factor P (186 aa).

This sequence belongs to the elongation factor P family.

The protein localises to the cytoplasm. Its pathway is protein biosynthesis; polypeptide chain elongation. Functionally, involved in peptide bond synthesis. Stimulates efficient translation and peptide-bond synthesis on native or reconstituted 70S ribosomes in vitro. Probably functions indirectly by altering the affinity of the ribosome for aminoacyl-tRNA, thus increasing their reactivity as acceptors for peptidyl transferase. This is Elongation factor P from Pelagibacter ubique (strain HTCC1062).